The following is a 1090-amino-acid chain: DNA damage-binding protein 1 (1090 aa).

Belongs to the DDB1 family. As to quaternary structure, component of the UV-DDB complex, which is composed of DDB1 and DDB2. As to expression, expressed in proliferating tissues. Highly expressed in shoot apical meristem (SAM). Expressed in roots, young leaves, flag leaves, and panicles. Not detected in mature leaves.

The protein localises to the nucleus. Functionally, required for DNA repair. Binds to DDB2 to form the UV-damaged DNA-binding protein complex (the UV-DDB complex). The UV-DDB complex may recognize UV-induced DNA damage and recruit proteins of the nucleotide excision repair pathway (the NER pathway) to initiate DNA repair. May function as the substrate recognition module for a DCX (DDB1-CUL4-X-box) E3 ubiquitin-protein ligase complex. This chain is DNA damage-binding protein 1, found in Oryza sativa subsp. japonica (Rice).